Consider the following 269-residue polypeptide: MSTGQAPEKSNFSQRCSLLSRYLKEKGSFGNINMGLARKSDLELAGKFDLKGQQNVIKKVETSETRPFKLIQKFSIGEASTSTEDKAIYIDLSEPAKVAPESGNSQLTIFFGGKVMVFNEFPEDKAKEIMEVAKEANHVAVDSKNSQSHMNLDKSNVVIPDLNEPTSSGNNEDQETGQQHQVVERIARRASLHRFFAKRKDRAVARAPYQVNQHGSHLPPKPEMVAPSIKSGQSSQHIATPPKPKAHNHMPMEVDKKEGQSSKNLELKL.

Residues 100 to 135 (PESGNSQLTIFFGGKVMVFNEFPEDKAKEIMEVAKE) enclose the Tify domain. Residues 160-181 (PDLNEPTSSGNNEDQETGQQHQ) form a disordered region. Over residues 164 to 181 (EPTSSGNNEDQETGQQHQ) the composition is skewed to polar residues. Positions 186 to 210 (IARRASLHRFFAKRKDRAVARAPYQ) match the Jas motif. The Nuclear localization signal signature appears at 187–194 (ARRASLHR). The segment at 209 to 269 (YQVNQHGSHL…QSSKNLELKL (61 aa)) is disordered. Residues 250–269 (MPMEVDKKEGQSSKNLELKL) are compositionally biased toward basic and acidic residues.

Belongs to the TIFY/JAZ family. In terms of assembly, homo- and heterodimer. Interacts with MYC2, AFPH2/NINJA, TIFY10A/JAZ1, TIFY10B/JAZ2, TIFY11A/JAZ5, TIFY5A/JAZ8, TIFY9/JAZ10 and TIFY3B/JAZ12. (Microbial infection) Interacts with the pathogenic Pseudomonas syringae HopZ1a protein. (Microbial infection) Acetylated by Pseudomonas syringae HopZ1a. In terms of processing, ubiquitinated. Targeted for degradation by the SCF(COI1) E3 ubiquitin ligase-proteasome pathway during jasmonate signaling.

The protein localises to the nucleus. Its subcellular location is the cell membrane. In terms of biological role, repressor of jasmonate responses. This chain is Protein TIFY 11B, found in Arabidopsis thaliana (Mouse-ear cress).